The sequence spans 387 residues: Phosphoglycerate kinase (387 aa).

Residues 21–23 (DLN), Arg36, 59–62 (HLGR), Arg113, and Arg146 contribute to the substrate site. ATP contacts are provided by residues Lys197, Glu314, and 340 to 343 (GGDT).

This sequence belongs to the phosphoglycerate kinase family. In terms of assembly, monomer.

The protein localises to the cytoplasm. It catalyses the reaction (2R)-3-phosphoglycerate + ATP = (2R)-3-phospho-glyceroyl phosphate + ADP. It functions in the pathway carbohydrate degradation; glycolysis; pyruvate from D-glyceraldehyde 3-phosphate: step 2/5. The protein is Phosphoglycerate kinase of Sodalis glossinidius (strain morsitans).